The following is a 95-amino-acid chain: Signal recognition particle 19 kDa protein (95 aa).

The protein belongs to the SRP19 family. In terms of assembly, part of the signal recognition particle protein translocation system, which is composed of SRP and FtsY. Archaeal SRP consists of a 7S RNA molecule of 300 nucleotides and two protein subunits: SRP54 and SRP19.

The protein resides in the cytoplasm. In terms of biological role, involved in targeting and insertion of nascent membrane proteins into the cytoplasmic membrane. Binds directly to 7S RNA and mediates binding of the 54 kDa subunit of the SRP. This chain is Signal recognition particle 19 kDa protein, found in Methanococcoides burtonii (strain DSM 6242 / NBRC 107633 / OCM 468 / ACE-M).